The following is a 225-amino-acid chain: UPF0758 protein Mhun_2739 (225 aa).

The region spanning 102–225 (RITEPDHILK…VTSLRSLGYL (124 aa)) is the MPN domain. 3 residues coordinate Zn(2+): His-174, His-176, and Asp-187. The JAMM motif signature appears at 174–187 (HNHPSGNPEPSSED).

It belongs to the UPF0758 family.

The sequence is that of UPF0758 protein Mhun_2739 from Methanospirillum hungatei JF-1 (strain ATCC 27890 / DSM 864 / NBRC 100397 / JF-1).